A 538-amino-acid polypeptide reads, in one-letter code: Nicotinate phosphoribosyltransferase (538 aa).

2 residues coordinate nicotinate: Tyr-21 and Thr-210. A Phosphohistidine modification is found at His-213. Arg-318 contributes to the nicotinate binding site. Thr-380 lines the 5-phospho-alpha-D-ribose 1-diphosphate pocket. Ser-537 carries the phosphoserine modification.

It belongs to the NAPRTase family. In terms of assembly, homodimer. Requires Mg(2+) as cofactor. It depends on Mn(2+) as a cofactor. Transiently phosphorylated on a His residue during the reaction cycle. Phosphorylation strongly increases the affinity for substrates and increases the rate of nicotinate D-ribonucleotide production. Dephosphorylation regenerates the low-affinity form of the enzyme, leading to product release.

The protein resides in the cytoplasm. It is found in the cytosol. The enzyme catalyses nicotinate + 5-phospho-alpha-D-ribose 1-diphosphate + ATP + H2O = nicotinate beta-D-ribonucleotide + ADP + phosphate + diphosphate. The protein operates within cofactor biosynthesis; NAD(+) biosynthesis; nicotinate D-ribonucleotide from nicotinate: step 1/1. Functionally, catalyzes the first step in the biosynthesis of NAD from nicotinic acid, the ATP-dependent synthesis of beta-nicotinate D-ribonucleotide from nicotinate and 5-phospho-D-ribose 1-phosphate. Helps prevent cellular oxidative stress via its role in NAD biosynthesis. The protein is Nicotinate phosphoribosyltransferase (NAPRT) of Homo sapiens (Human).